The sequence spans 119 residues: Large ribosomal subunit protein bL20 (119 aa).

The protein belongs to the bacterial ribosomal protein bL20 family.

Functionally, binds directly to 23S ribosomal RNA and is necessary for the in vitro assembly process of the 50S ribosomal subunit. It is not involved in the protein synthesizing functions of that subunit. The protein is Large ribosomal subunit protein bL20 of Saccharophagus degradans (strain 2-40 / ATCC 43961 / DSM 17024).